Reading from the N-terminus, the 158-residue chain is MIRVAHSRKVQLDEIDRAILRLLQEDGRMSYSEISRRINVPESTVRARVNRLIREGVIRKFAALINPFKAGYEIVAFIAIDAEPAKVRQVVEELAKLPEVDVLGIVTGAHDIFMQVTVRDLQELERFILEKMAKIDGIRSTETSILTSVKKWGYARVF.

The HTH asnC-type domain maps to 12-73 (LDEIDRAILR…LINPFKAGYE (62 aa)). Residues 31–50 (YSEISRRINVPESTVRARVN) constitute a DNA-binding region (H-T-H motif).

This is an uncharacterized protein from Pyrococcus abyssi (strain GE5 / Orsay).